Consider the following 490-residue polypeptide: Betaine aldehyde dehydrogenase (490 aa).

Residues I27 and D93 each contribute to the K(+) site. 150 to 152 (GAW) provides a ligand contact to NAD(+). The active-site Charge relay system is K162. NAD(+) is bound at residue 176-179 (KPSE). Residue V180 coordinates K(+). 230–233 (GTDT) lines the NAD(+) pocket. L246 provides a ligand contact to K(+). The active-site Proton acceptor is E252. Positions 254, 286, and 387 each coordinate NAD(+). C286 acts as the Nucleophile in catalysis. At C286 the chain carries Cysteine sulfenic acid (-SOH). Residues K457 and G460 each contribute to the K(+) site. The active-site Charge relay system is the E464.

It belongs to the aldehyde dehydrogenase family. As to quaternary structure, dimer of dimers. It depends on K(+) as a cofactor.

The catalysed reaction is betaine aldehyde + NAD(+) + H2O = glycine betaine + NADH + 2 H(+). The protein operates within amine and polyamine biosynthesis; betaine biosynthesis via choline pathway; betaine from betaine aldehyde: step 1/1. Involved in the biosynthesis of the osmoprotectant glycine betaine. Catalyzes the irreversible oxidation of betaine aldehyde to the corresponding acid. This Pseudomonas fluorescens (strain SBW25) protein is Betaine aldehyde dehydrogenase.